Here is a 562-residue protein sequence, read N- to C-terminus: Long-chain-fatty-acid--CoA ligase (562 aa).

213-224 (YTGGTTGVAKGA) provides a ligand contact to ATP.

This sequence belongs to the ATP-dependent AMP-binding enzyme family. It depends on Mg(2+) as a cofactor.

The protein resides in the membrane. The catalysed reaction is a long-chain fatty acid + ATP + CoA = a long-chain fatty acyl-CoA + AMP + diphosphate. It functions in the pathway lipid metabolism; fatty acid beta-oxidation. Catalyzes the esterification, concomitant with transport, of exogenous long-chain fatty acids into metabolically active CoA thioesters for subsequent degradation or incorporation into phospholipids. The polypeptide is Long-chain-fatty-acid--CoA ligase (fadD) (Yersinia pestis).